A 307-amino-acid chain; its full sequence is Upstream stimulatory factor 1 (307 aa).

2 disordered regions span residues 104 to 131 (DDNGETDASGPETHYTYFPTDSSTSVGG) and 168 to 207 (QGGSQRSIAPRTHPYSPKSDGPRTTRDDKRRAQHNEVERR). Positions 122-131 (PTDSSTSVGG) are enriched in low complexity. Over residues 187 to 207 (DGPRTTRDDKRRAQHNEVERR) the composition is skewed to basic and acidic residues. The bHLH domain occupies 196–251 (KRRAQHNEVERRRRDKINNWIVQLSKIIPDCSMESTKTGQSKGGILSKACDYIQEL). Positions 268–289 (LQMDNEVLRQQVEDLKNNNLTL) are leucine-zipper.

As to quaternary structure, efficient DNA binding requires dimerization with another bHLH protein. Binds DNA as a homodimer or a heterodimer. As to expression, oocyte and somatic tissue. Oocytic and somatic forms of this protein exist, probably as a result of post-translational modifications or minor splicing differences.

Its subcellular location is the nucleus. In terms of biological role, may act as a regulator of transcription factor IIIA (TFIIIA) gene expression. The protein is Upstream stimulatory factor 1 (usf1) of Xenopus borealis (Kenyan clawed frog).